We begin with the raw amino-acid sequence, 97 residues long: MTKIWVEVAYALPDKQYVIPVELTLGDTVEQAIIASNILTICNDIDLTKNKVGIYSRPAKLSDNVRDGDRVEIYRPLIADPKEMRRKRAEKARQKTE.

It belongs to the UPF0125 (RnfH) family.

In Proteus mirabilis (strain HI4320), this protein is Protein RnfH.